The chain runs to 377 residues: Nitric oxide reductase FlRd-NAD(+) reductase (377 aa).

It belongs to the FAD-dependent oxidoreductase family. FAD serves as cofactor.

It is found in the cytoplasm. The catalysed reaction is 2 reduced [nitric oxide reductase rubredoxin domain] + NAD(+) + H(+) = 2 oxidized [nitric oxide reductase rubredoxin domain] + NADH. It participates in nitrogen metabolism; nitric oxide reduction. Its function is as follows. One of at least two accessory proteins for anaerobic nitric oxide (NO) reductase. Reduces the rubredoxin moiety of NO reductase. The chain is Nitric oxide reductase FlRd-NAD(+) reductase from Escherichia coli O157:H7.